The chain runs to 4168 residues: Centrosome-associated protein ALMS1 (4168 aa).

The span at 1–29 (MEPEDLPWPGELEEEEEEEEEEEEEEEEA) shows a compositional bias: acidic residues. The disordered stretch occupies residues 1–69 (MEPEDLPWPG…YGPQHLESID (69 aa)). The segment covering 30 to 40 (AAAAAANVDDV) has biased composition (low complexity). A compositionally biased stretch (basic and acidic residues) spans 49–58 (EAGRELDSDS). Serine 464 is subject to Phosphoserine. Repeat copies occupy residues 539–585 (QKTL…SIFY), 586–632 (QQGL…GTFY), 633–679 (QQEL…LFFY), 680–726 (RQTL…GIFY), 727–774 (QQEF…SILY), 775–821 (PQDL…LVFY), 822–871 (QQAL…SAFY), 872–918 (QQTL…IIFS), 919–965 (QQTL…SVFY), 966–1013 (QQEL…SIFY), 1014–1060 (QQEW…SVLY), 1061–1107 (PQVL…GIFY), 1108–1155 (QQTL…SIFH), 1156–1202 (QQAL…GIFY), 1203–1249 (QQTL…GIFY), 1250–1297 (QQVL…SIFY), 1298–1344 (QQSL…GVFY), 1345–1392 (QQVL…SIFY), 1393–1439 (QQSL…GSFY), 1440–1486 (QQVL…IVIY), 1487–1534 (KQAF…GSFY), 1535–1581 (QLAL…IVNY), 1582–1628 (KQAF…ITFY), 1629–1675 (RQAL…VIFY), 1676–1722 (QQTL…IVFY), 1723–1769 (QQAL…NISY), 1770–1816 (QQEL…IVSY), 1817–1861 (QREL…VISY), 1862–1906 (EQEL…SIFH), 1907–1951 (QQEL…SVIS), 1952–1999 (QQEL…LKIS), 2060–2105 (QQLP…NIFS), 2106–2152 (PQEL…DIFY), and 2153–2200 (QKDL…LVSE). The segment at 539–2200 (QKTLADTHLT…HGENHKLVSE (1662 aa)) is 34 X 47 AA approximate tandem repeat. 2 disordered regions span residues 558–579 (PEPA…SHRG) and 606–625 (GLAD…YSHR). Composition is skewed to polar residues over residues 564–574 (KTATPTVLSSS) and 609–622 (DQTT…STSY). Disordered regions lie at residues 699 to 718 (SGPA…PHSH) and 735 to 769 (QTEE…QREK). Over residues 705-715 (KTGTATVLSTP) the composition is skewed to polar residues. The tract at residues 841 to 865 (SGPADGKTGTPAVTSTSSASSSLGE) is disordered. 3 disordered regions span residues 946-969 (GTPT…QQEL), 983-1007 (AIPG…SHRE), and 1027-1055 (LKVS…QREK). Over residues 989-1003 (DQKTVPTPTVPSGSF) the composition is skewed to polar residues. Position 1189 is a phosphoserine (serine 1189). Residues 1221 to 1241 (VLGPADQKTGTPTPTSASYSH) form a disordered region. Over residues 1228 to 1240 (KTGTPTPTSASYS) the composition is skewed to polar residues. A disordered region spans residues 1786–1806 (SNVPGPADQKTGVSTVTSTSY). The segment covering 1796–1806 (TGVSTVTSTSY) has biased composition (low complexity). Residue serine 2143 is modified to Phosphoserine. 2 disordered regions span residues 2456–2477 (ITDS…SSVD) and 2600–2621 (HPCA…NPSS). At serine 2466 the chain carries Phosphoserine. Residue serine 2632 is modified to Phosphoserine. 6 disordered regions span residues 2753–2828 (HFTE…STRA), 2892–2912 (KAPR…QHQD), 3283–3310 (RQIP…AIAP), 3389–3426 (EAAQ…MKNL), 3566–3594 (QVRD…TTQH), and 3643–3704 (SLQV…HRAG). The span at 2754-2766 (FTEEQNPPRDLKQ) shows a compositional bias: basic and acidic residues. Positions 2767-2779 (KTSSPSSFKMHSN) are enriched in polar residues. 2 stretches are compositionally biased toward basic and acidic residues: residues 2780–2793 (SQDK…EGRR) and 2800–2816 (VDFE…ERSD). Serine 2805 carries the post-translational modification Phosphoserine. A compositionally biased stretch (polar residues) spans 2817–2828 (FTGSHSEPSTRA). A compositionally biased stretch (polar residues) spans 3294–3305 (DTTVESSHSGSN). A compositionally biased stretch (basic and acidic residues) spans 3392 to 3404 (QAKEKESLQKDTA). Residues 3405–3416 (DSSAAAAAEHSA) show a composition bias toward low complexity. 2 stretches are compositionally biased toward basic and acidic residues: residues 3649 to 3664 (STHD…KEWS) and 3680 to 3694 (KSLE…ELKK). Positions 3695–3704 (SKVLSHHRAG) are enriched in basic residues. An ALMS motif region spans residues 4036–4167 (TLQESLQFHR…NQLLGRKVPW (132 aa)).

The protein belongs to the ALMS1 family. As to expression, expressed in all tissues tested including adipose and pancreas. Expressed by beta-cells of the islets in the pancreas (at protein level).

The protein localises to the cytoplasm. It is found in the cytoskeleton. The protein resides in the microtubule organizing center. Its subcellular location is the centrosome. It localises to the cilium basal body. The protein localises to the spindle pole. Its function is as follows. Involved in PCM1-dependent intracellular transport. Required, directly or indirectly, for the localization of NCAPD2 to the proximal ends of centrioles. Required for proper formation and/or maintenance of primary cilia (PC), microtubule-based structures that protrude from the surface of epithelial cells. The polypeptide is Centrosome-associated protein ALMS1 (ALMS1) (Homo sapiens (Human)).